A 98-amino-acid polypeptide reads, in one-letter code: NADH-ubiquinone oxidoreductase chain 4L (98 aa).

Transmembrane regions (helical) follow at residues Met-1–Met-21, Ser-29–Leu-49, and Leu-61–Ile-81.

It belongs to the complex I subunit 4L family. Core subunit of respiratory chain NADH dehydrogenase (Complex I) which is composed of 45 different subunits.

The protein localises to the mitochondrion inner membrane. It catalyses the reaction a ubiquinone + NADH + 5 H(+)(in) = a ubiquinol + NAD(+) + 4 H(+)(out). Functionally, core subunit of the mitochondrial membrane respiratory chain NADH dehydrogenase (Complex I) which catalyzes electron transfer from NADH through the respiratory chain, using ubiquinone as an electron acceptor. Part of the enzyme membrane arm which is embedded in the lipid bilayer and involved in proton translocation. The sequence is that of NADH-ubiquinone oxidoreductase chain 4L (MT-ND4L) from Elephas maximus (Indian elephant).